The following is a 419-amino-acid chain: UPF0229 protein TERTU_3150 (419 aa).

The segment at 63–111 is disordered; that stretch reads IFHHGSGGKNNRVLPGNDRFNGGDHIERPEQGQGGGGNGSGASDSGEGE. The segment covering 83 to 92 has biased composition (basic and acidic residues); sequence NGGDHIERPE.

The protein belongs to the UPF0229 family.

The protein is UPF0229 protein TERTU_3150 of Teredinibacter turnerae (strain ATCC 39867 / T7901).